Reading from the N-terminus, the 585-residue chain is Efflux pump dotC (585 aa).

Over residues 1-34 (MSEDHTKADNLSEKDPHSPERSDSSSHEDAHARE) the composition is skewed to basic and acidic residues. A disordered region spans residues 1–45 (MSEDHTKADNLSEKDPHSPERSDSSSHEDAHAREEEESSDDDGAL). N-linked (GlcNAc...) asparagine glycosylation occurs at N10. Over residues 35-44 (EEESSDDDGA) the composition is skewed to acidic residues. The helical transmembrane segment at 51-71 (SLIAIVMIALSLIGLQLAVFL) threads the bilayer. N91 carries N-linked (GlcNAc...) asparagine glycosylation. Helical transmembrane passes span 94-114 (AAYT…TPIW), 132-152 (ALFM…MLIT), 158-178 (GAAG…LFSL), 186-206 (GMIG…GGAF), 214-234 (WCFY…FFFL), 247-267 (FAAI…MFLF), 280-300 (SATV…FGLV), 323-343 (ALLV…YLPL), 353-373 (PILA…SAAA), 385-405 (LIPM…LINF), 414-434 (LIIY…APLV), 449-471 (TATF…QVLY), and 524-544 (SPMW…ILLV). Residues 564 to 585 (KKAEAERKAERQAKDLEKAQKS) form a disordered region.

The protein belongs to the major facilitator superfamily. TCR/Tet family.

The protein resides in the cell membrane. It localises to the vacuole membrane. Functionally, efflux pump; part of the gene cluster that mediates the biosynthesis of dothistromin (DOTH), a polyketide toxin very similar in structure to the aflatoxin precursor, versicolorin B. One function of dotC may be to transport early-stage dothistromin biosynthetic intermediates from the cytoplasm into vacuoles, thereby affecting the rate of dothistromin production. This chain is Efflux pump dotC, found in Dothistroma septosporum (Red band needle blight fungus).